The chain runs to 353 residues: uncharacterized protein (353 aa).

Residues 1–28 (MHLTIMRRFAVLLLLAIFLGGCSGSNGA) form the signal peptide.

This is an uncharacterized protein from Archaeoglobus fulgidus (strain ATCC 49558 / DSM 4304 / JCM 9628 / NBRC 100126 / VC-16).